A 691-amino-acid polypeptide reads, in one-letter code: Elongation factor G 2 (691 aa).

In terms of domain architecture, tr-type G spans 8-287 (DRYRNIGIMA…AVVDYLPSPL (280 aa)). Residues 17–24 (AHIDAGKT), 85–89 (DTPGH), and 139–142 (NKMD) each bind GTP.

Belongs to the TRAFAC class translation factor GTPase superfamily. Classic translation factor GTPase family. EF-G/EF-2 subfamily.

It localises to the cytoplasm. Its function is as follows. Catalyzes the GTP-dependent ribosomal translocation step during translation elongation. During this step, the ribosome changes from the pre-translocational (PRE) to the post-translocational (POST) state as the newly formed A-site-bound peptidyl-tRNA and P-site-bound deacylated tRNA move to the P and E sites, respectively. Catalyzes the coordinated movement of the two tRNA molecules, the mRNA and conformational changes in the ribosome. The polypeptide is Elongation factor G 2 (Myxococcus xanthus (strain DK1622)).